The primary structure comprises 399 residues: Ribonucleoside-diphosphate reductase small chain 1 (399 aa).

3 positions are modified to phosphoserine: Ser15, Ser24, and Ser41. Fe cation is bound by residues Asp145, Glu176, and His179. Residue Tyr183 is part of the active site. Fe cation contacts are provided by Glu239, Glu273, and His276.

It belongs to the ribonucleoside diphosphate reductase small chain family. In terms of assembly, heterotetramer of two large (R1) and two small (R2) subunits. S.cerevisiae has two different R1 subunits (RNR1 and RNR3) and two different R2 subunits (RNR2 and RNR4). The functional form of the small subunits is a RNR2-RNR4 heterodimer, where RNR2 provides the iron-radical center and RNR4 is required for proper folding of RNR2 and assembly with the large subunits. Under normal growth conditions, the active form of the large subunits is a homodimer of the constitutively expressed RNR1. In damaged cells or cells arrested for DNA synthesis, the reductase consists of multiple species because of the association of the small subunits (RNR2-RNR4) with either the RNR1 homodimer or a heterodimer of RNR1 and the damage-inducible RNR3. Interacts with DIF1. Requires Fe cation as cofactor.

The protein localises to the nucleus. It carries out the reaction a 2'-deoxyribonucleoside 5'-diphosphate + [thioredoxin]-disulfide + H2O = a ribonucleoside 5'-diphosphate + [thioredoxin]-dithiol. In terms of biological role, provides the precursors necessary for DNA synthesis. Catalyzes the biosynthesis of deoxyribonucleotides from the corresponding ribonucleotides. RNR2 provides the diiron-tyrosyl radical center. The chain is Ribonucleoside-diphosphate reductase small chain 1 (RNR2) from Saccharomyces cerevisiae (strain ATCC 204508 / S288c) (Baker's yeast).